The chain runs to 271 residues: Thermoregulatory protein LcrF (271 aa).

The HTH araC/xylS-type domain maps to 167-265; the sequence is ERLQKFMEEN…GCTPSQARLT (99 aa). 2 DNA-binding regions (H-T-H motif) span residues 184-205 and 232-255; these read SKFA…GTVY and IVDI…RRRF.

Transcriptional activator of the thermally regulated virulent yopE gene. LcrF activity could be modulated by the interaction with an inducer molecule serving as a temperature messenger. The availability of the messenger would in turn be controlled by a temperature-responsive process serving as a cellular thermometer. The sequence is that of Thermoregulatory protein LcrF (lcrF) from Yersinia pestis.